The primary structure comprises 146 residues: Snaclec mucetin subunit beta (146 aa).

Positions 1–23 are cleaved as a signal peptide; it reads MGRFIFVSFGLLVVFISLSGTEA. Cystine bridges form between C27–C38, C55–C144, and C121–C136. Residues 34–145 form the C-type lectin domain; it reads YDEHCYQVFQ…CSSKRYVVCK (112 aa).

The protein belongs to the snaclec family. As to quaternary structure, dimer and tetramer of heterodimers of alpha and beta subunits ((alphabeta)(2) and (alphabeta)(4)); disulfide-linked. These two multimeric forms are found. In terms of processing, the complex is glycosylated. Expressed by the venom gland.

The protein resides in the secreted. Its function is as follows. Potent platelet activator that acts via GPIb (GP1BA/GP1BB). After activation by the toxin, the receptor is redistributed on platelet surface thanks to cytoskeletal translocation. The indirect activation of integrin alpha-IIb/beta-3 (ITGA2B/ITGB3) also induced by the toxin is downstream the cytoskeletal translocation of GPIb. This is Snaclec mucetin subunit beta from Protobothrops mucrosquamatus (Taiwan habu).